Reading from the N-terminus, the 708-residue chain is B-cell lymphoma 6 protein homolog (708 aa).

Residues 32-99 enclose the BTB domain; the sequence is TDVVIIVNRE…MYTSRLNLRE (68 aa). The segment covering 303–317 has biased composition (basic and acidic residues); that stretch reads AKEEERTSSEDEISQ. 2 disordered regions span residues 303–371 and 431–470; these read AKEE…KSPT and PTKMSVNGEDSNIPQASRLNNIVNRSRDGSPRSSEGQSPL. Composition is skewed to polar residues over residues 333-370 and 431-454; these read SPQSPQKSDCQPNSPTESSSSKNARISQNSNSLFTKSP and PTKMSVNGEDSNIPQASRLNNIVN. 6 consecutive C2H2-type zinc fingers follow at residues 520 to 543, 548 to 570, 576 to 598, 604 to 626, 632 to 654, and 660 to 683; these read FFCNECDCRFSEEASLKRHSLQVH, YKCDRCQASFRYKGNLASHKTVH, YRCNICGAQFNRPANLKTHTRIH, YKCETCGARFVQVAHLRAHVLIH, YPCEICGTRFRHLQTLKSHLRIH, and YHCEKCNLHFRHKSQLRLHLRQKH.

The protein localises to the nucleus. Transcriptional repressor mainly required for germinal center (GC) formation and antibody affinity maturation which has different mechanisms of action specific to the lineage and biological functions. Forms complexes with different corepressors and histone deacetylases to repress the transcriptional expression of different subsets of target genes. Represses its target genes by binding directly to the DNA sequence 5'-TTCCTAGAA-3' (BCL6-binding site) or indirectly by repressing the transcriptional activity of transcription factors. In GC B-cells, represses genes that function in differentiation, inflammation, apoptosis and cell cycle control, also autoregulates its transcriptional expression and up-regulates, indirectly, the expression of some genes important for GC reactions, such as AICDA, through the repression of microRNAs expression. An important function is to allow GC B-cells to proliferate very rapidly in response to T-cell dependent antigens and tolerate the physiological DNA breaks required for immunglobulin class switch recombination and somatic hypermutation without inducing a p53/TP53-dependent apoptotic response. In follicular helper CD4(+) T-cells (T(FH) cells), promotes the expression of T(FH)-related genes but inhibits the differentiation of T(H)1, T(H)2 and T(H)17 cells. Also required for the establishment and maintenance of immunological memory for both T- and B-cells. Suppresses macrophage proliferation through competition with STAT5 for STAT-binding motifs binding on certain target genes, such as CCL2 and CCND2. In response to genotoxic stress, controls cell cycle arrest in GC B-cells in both p53/TP53-dependedent and -independent manners. Besides, also controls neurogenesis through the alteration of the composition of NOTCH-dependent transcriptional complexes at selective NOTCH targets, such as HES5, including the recruitment of the deacetylase SIRT1 and resulting in an epigenetic silencing leading to neuronal differentiation. This Gallus gallus (Chicken) protein is B-cell lymphoma 6 protein homolog.